Reading from the N-terminus, the 146-residue chain is Anti-sigma F factor (146 aa).

The protein belongs to the anti-sigma-factor family.

The catalysed reaction is L-seryl-[protein] + ATP = O-phospho-L-seryl-[protein] + ADP + H(+). It catalyses the reaction L-threonyl-[protein] + ATP = O-phospho-L-threonyl-[protein] + ADP + H(+). Functionally, binds to sigma F and blocks its ability to form an RNA polymerase holoenzyme (E-sigma F). Phosphorylates SpoIIAA on a serine residue. This phosphorylation may enable SpoIIAA to act as an anti-anti-sigma factor that counteracts SpoIIAB and thus releases sigma F from inhibition. The protein is Anti-sigma F factor of Geobacillus sp. (strain WCH70).